The chain runs to 523 residues: Metalloprotease TIKI2 (523 aa).

The signal sequence occupies residues 1-26; that stretch reads MGKTMWARAVFLCFSVGTLLWQEVLT. At 27–499 the chain is on the extracellular side; that stretch reads RRIPVDTGQC…HSQSNSSPKC (473 aa). N225, N234, N283, and N341 each carry an N-linked (GlcNAc...) asparagine glycan. The helical transmembrane segment at 500–516 threads the bilayer; that stretch reads LSASPAFLYTLVTLCLI. Topologically, residues 517–523 are cytoplasmic; that stretch reads TTMRTRS.

It belongs to the TIKI family. Mn(2+) is required as a cofactor. It depends on Co(2+) as a cofactor.

The protein resides in the cell membrane. In terms of biological role, metalloprotease that acts as a negative regulator of the Wnt signaling pathway by mediating the cleavage of the N-terminal residues of a subset of Wnt proteins. Following cleavage, Wnt proteins become oxidized and form large disulfide-bond oligomers, leading to their inactivation. Able to cleave wnt8. Required for head formation. The protein is Metalloprotease TIKI2 (trabd2b) of Xenopus tropicalis (Western clawed frog).